Here is a 424-residue protein sequence, read N- to C-terminus: Formyl-CoA:oxalate CoA-transferase (424 aa).

CoA-binding positions include 17–18 (QS), Arg38, 96–98 (NFA), Arg104, and 136–139 (KVYE). The active-site Nucleophile is the Asp168. Position 247–249 (247–249 (GGQ)) interacts with substrate.

It belongs to the CoA-transferase III family. Frc subfamily. In terms of assembly, homodimer.

It catalyses the reaction formyl-CoA + oxalate = oxalyl-CoA + formate. It functions in the pathway metabolic intermediate degradation; oxalate degradation; CO(2) and formate from oxalate: step 1/2. In terms of biological role, involved in the catabolism of oxalate and in the adapatation to low pH via the induction of the oxalate-dependent acid tolerance response (ATR). Catalyzes the transfer of the CoA moiety from formyl-CoA to oxalate. In Afipia carboxidovorans (strain ATCC 49405 / DSM 1227 / KCTC 32145 / OM5) (Oligotropha carboxidovorans), this protein is Formyl-CoA:oxalate CoA-transferase.